The primary structure comprises 123 residues: Small ribosomal subunit protein uS12 (123 aa).

A 3-methylthioaspartic acid modification is found at Asp-89. The tract at residues 102 to 123 (LDTSGVQDRRQRRSKYGAKRPK) is disordered. The span at 111 to 123 (RQRRSKYGAKRPK) shows a compositional bias: basic residues.

The protein belongs to the universal ribosomal protein uS12 family. Part of the 30S ribosomal subunit. Contacts proteins S8 and S17. May interact with IF1 in the 30S initiation complex.

Its function is as follows. With S4 and S5 plays an important role in translational accuracy. Interacts with and stabilizes bases of the 16S rRNA that are involved in tRNA selection in the A site and with the mRNA backbone. Located at the interface of the 30S and 50S subunits, it traverses the body of the 30S subunit contacting proteins on the other side and probably holding the rRNA structure together. The combined cluster of proteins S8, S12 and S17 appears to hold together the shoulder and platform of the 30S subunit. The sequence is that of Small ribosomal subunit protein uS12 from Lawsonia intracellularis (strain PHE/MN1-00).